The chain runs to 391 residues: Transaldolase (391 aa).

The interval 1-329 (MGKNLLEQLR…RLKVLDGQEH (329 aa)) is transaldolase. Lys-136 functions as the Schiff-base intermediate with substrate in the catalytic mechanism. 2 consecutive EF-hand domains span residues 329–364 (HIKHGAEEIFHAYDLDGDGFITREEWAGTDVVFDAL) and 365–387 (DRDHDGKITAAEMSAGLGAAFRL). Ca(2+)-binding residues include Asp-342, Asp-344, Asp-346, Glu-353, Asp-365, Asp-367, Asp-369, Lys-371, and Glu-376.

It belongs to the transaldolase family. Type 1 subfamily.

The protein resides in the cytoplasm. The catalysed reaction is D-sedoheptulose 7-phosphate + D-glyceraldehyde 3-phosphate = D-erythrose 4-phosphate + beta-D-fructose 6-phosphate. It functions in the pathway carbohydrate degradation; pentose phosphate pathway; D-glyceraldehyde 3-phosphate and beta-D-fructose 6-phosphate from D-ribose 5-phosphate and D-xylulose 5-phosphate (non-oxidative stage): step 2/3. In terms of biological role, transaldolase is important for the balance of metabolites in the pentose-phosphate pathway. In Synechocystis sp. (strain ATCC 27184 / PCC 6803 / Kazusa), this protein is Transaldolase.